The chain runs to 148 residues: uncharacterized protein (148 aa).

Residues 7-29 form a helical membrane-spanning segment; that stretch reads MLILMSLVKIVLTCLPTGVIEWL.

It localises to the membrane. This is an uncharacterized protein from Bacillus subtilis (strain 168).